The following is a 137-amino-acid chain: Large ribosomal subunit protein mL41 (137 aa).

A mitochondrion-targeting transit peptide spans 1–13 (MGVLAAAARCLVR).

Belongs to the mitochondrion-specific ribosomal protein mL41 family. As to quaternary structure, component of the mitochondrial large ribosomal subunit (mt-LSU). Mature mammalian 55S mitochondrial ribosomes consist of a small (28S) and a large (39S) subunit. The 28S small subunit contains a 12S ribosomal RNA (12S mt-rRNA) and 30 different proteins. The 39S large subunit contains a 16S rRNA (16S mt-rRNA), a copy of mitochondrial valine transfer RNA (mt-tRNA(Val)), which plays an integral structural role, and 52 different proteins. Interacts with BCL2. Present in kidney, liver, thymus and testis, and at lower level in brain and spleen (at protein level).

It is found in the mitochondrion. In terms of biological role, component of the mitochondrial ribosome large subunit. Also involved in apoptosis and cell cycle. Enhances p53/TP53 stability, thereby contributing to p53/TP53-induced apoptosis in response to growth-inhibitory condition. Enhances p53/TP53 translocation to the mitochondria. Has the ability to arrest the cell cycle at the G1 phase, possibly by stabilizing the CDKN1A and CDKN1B (p27Kip1) proteins. This Homo sapiens (Human) protein is Large ribosomal subunit protein mL41 (MRPL41).